We begin with the raw amino-acid sequence, 287 residues long: Acetylglutamate kinase (287 aa).

Substrate-binding positions include 70–71 (GG), R92, and N184.

It belongs to the acetylglutamate kinase family. ArgB subfamily.

The protein localises to the cytoplasm. It catalyses the reaction N-acetyl-L-glutamate + ATP = N-acetyl-L-glutamyl 5-phosphate + ADP. Its pathway is amino-acid biosynthesis; L-arginine biosynthesis; N(2)-acetyl-L-ornithine from L-glutamate: step 2/4. Functionally, catalyzes the ATP-dependent phosphorylation of N-acetyl-L-glutamate. The polypeptide is Acetylglutamate kinase (Ruegeria pomeroyi (strain ATCC 700808 / DSM 15171 / DSS-3) (Silicibacter pomeroyi)).